A 114-amino-acid polypeptide reads, in one-letter code: ATP synthase subunit beta, mitochondrial (114 aa).

44 to 51 is a binding site for ATP; sequence GGAGVGKT.

This sequence belongs to the ATPase alpha/beta chains family. In terms of assembly, F-type ATPases have 2 components, CF(1) - the catalytic core - and CF(0) - the membrane proton channel. CF(1) has five subunits: alpha(3), beta(3), gamma(1), delta(1), epsilon(1). CF(0) has three main subunits: a, b and c.

The protein localises to the mitochondrion. The protein resides in the mitochondrion inner membrane. The catalysed reaction is ATP + H2O + 4 H(+)(in) = ADP + phosphate + 5 H(+)(out). In terms of biological role, mitochondrial membrane ATP synthase (F(1)F(0) ATP synthase or Complex V) produces ATP from ADP in the presence of a proton gradient across the membrane which is generated by electron transport complexes of the respiratory chain. F-type ATPases consist of two structural domains, F(1) - containing the extramembraneous catalytic core, and F(0) - containing the membrane proton channel, linked together by a central stalk and a peripheral stalk. During catalysis, ATP synthesis in the catalytic domain of F(1) is coupled via a rotary mechanism of the central stalk subunits to proton translocation. Subunits alpha and beta form the catalytic core in F(1). Rotation of the central stalk against the surrounding alpha(3)beta(3) subunits leads to hydrolysis of ATP in three separate catalytic sites on the beta subunits. This is ATP synthase subunit beta, mitochondrial (atp2) from Penicillium glabrum (Penicillium frequentans).